The following is a 376-amino-acid chain: Growth/differentiation factor 8 (376 aa).

The signal sequence occupies residues 1 to 22 (MHLSQIVLYLSLLIALGPVVLS). Residues 23–267 (DQEAHQQPSV…ISEGPRRARR (245 aa)) constitute a propeptide that is removed on maturation. 4 disulfides stabilise this stretch: C273/C283, C282/C341, C310/C373, and C314/C375.

It belongs to the TGF-beta family. Homodimer; disulfide-linked. Highly expressed in muscle. Also expressed in other tissues such as eye, gill, ovary, gut and brain. Very low level detected in testis. Not expressed in liver, kidney, stomach or heart.

Its subcellular location is the secreted. Its function is as follows. Acts specifically as a negative regulator of skeletal muscle growth. This Oreochromis mossambicus (Mozambique tilapia) protein is Growth/differentiation factor 8.